We begin with the raw amino-acid sequence, 1066 residues long: Thyrotropin-releasing hormone-degrading ectoenzyme (1066 aa).

A compositionally biased stretch (basic and acidic residues) spans 1–14 (MALDGERGEQEEEK). Residues 1–43 (MALDGERGEQEEEKKKKKKKKKRKKKEEEGAEKSSSPFAATMG) are disordered. Over 1–81 (MALDGERGEQ…ERHIAVHKRL (81 aa)) the chain is Cytoplasmic. The span at 15–25 (KKKKKKKKRKK) shows a compositional bias: basic residues. Phosphothreonine; by PKC is present on Thr71. Residues 82–102 (VLAFAVSIVALLAVTMLAVLL) traverse the membrane as a helical; Signal-anchor for type II membrane protein segment. At 103–1066 (SLRFDECGAS…FQWLGKAMRH (964 aa)) the chain is on the extracellular side. The segment at 118-176 (TDGGLGGFPERDSNSSFPGSARRNHHAGGESSQRESGEVGTPGTPSAQPPSEEEREQWQ) is disordered. N-linked (GlcNAc...) asparagine glycosylation is found at Asn131, Asn202, Asn217, Asn264, and Asn380. Position 446–450 (446–450 (AAMEN)) interacts with substrate. Residue His482 coordinates Zn(2+). Residue Glu483 is the Proton acceptor of the active site. Zn(2+)-binding residues include His486 and Glu505. 7 N-linked (GlcNAc...) asparagine glycosylation sites follow: Asn647, Asn676, Asn691, Asn705, Asn726, Asn842, and Asn948.

It belongs to the peptidase M1 family. In terms of assembly, homodimer; disulfide-linked. It depends on Zn(2+) as a cofactor.

The protein localises to the membrane. It carries out the reaction Release of the N-terminal pyroglutamyl group from pGlu-|-His-Xaa tripeptides and pGlu-|-His-Xaa-Gly tetrapeptides.. In terms of biological role, specific inactivation of TRH after its release. The polypeptide is Thyrotropin-releasing hormone-degrading ectoenzyme (Trhde) (Mus musculus (Mouse)).